Consider the following 2059-residue polypeptide: Large tegument protein deneddylase (2059 aa).

Residues 1-230 (MRIIAGSTNQ…PDIALSLNDF (230 aa)) are deubiquitination activity. One can recognise a Peptidase C76 domain in the interval 3–220 (IIAGSTNQND…TILILKTYKD (218 aa)). Catalysis depends on residues cysteine 23, aspartate 155, and histidine 157. The segment at 245-272 (TNTLISKQSPSKRKQEKTSLNSNSLEKK) is disordered. Position 278 (serine 278) is a region of interest, interaction with inner tegument protein.

Belongs to the herpesviridae large tegument protein family. Interacts with host CUL1 and CUL4A; these interactions inhibit the E3 ligase activity of cullins. Interacts with inner tegument protein. Interacts with capsid vertex specific component CVC2. Interacts with the major capsid protein/MCP.

It localises to the virion tegument. The protein localises to the host cytoplasm. The protein resides in the host nucleus. It catalyses the reaction Thiol-dependent hydrolysis of ester, thioester, amide, peptide and isopeptide bonds formed by the C-terminal Gly of ubiquitin (a 76-residue protein attached to proteins as an intracellular targeting signal).. Functionally, large tegument protein that plays multiple roles in the viral cycle. During viral entry, remains associated with the capsid while most of the tegument is detached and participates in the capsid transport toward the host nucleus. Plays a role in the routing of the capsid at the nuclear pore complex and subsequent uncoating. Within the host nucleus, acts as a deneddylase and promotes the degradation of nuclear CRLs (cullin-RING ubiquitin ligases) and thereby stabilizes nuclear CRL substrates, while cytoplasmic CRLs remain unaffected. These modifications prevent host cell cycle S-phase progression and create a favorable environment allowing efficient viral genome replication. Participates later in the secondary envelopment of capsids. Indeed, plays a linker role for the association of the outer viral tegument to the capsids together with the inner tegument protein. The polypeptide is Large tegument protein deneddylase (U31) (Human herpesvirus 7 (strain JI) (HHV-7)).